Here is a 250-residue protein sequence, read N- to C-terminus: Capsid protein (250 aa).

Positions 1 to 31 (MPKRDAPWLMAGTSKVSRSGNYSPSGGMGSK) are disordered. The Bipartite nuclear localization signal motif lies at 3-19 (KRDAPWLMAGTSKVSRS). Residues 14–31 (SKVSRSGNYSPSGGMGSK) show a composition bias toward polar residues. The Nuclear localization signal motif lies at 34-48 (KANAWVNRPMYRKPR). A zinc finger lies at 53–70 (YKSPDVPKGCEGPCKVQS). A Nuclear export signal motif is present at residues 95-116 (ITHRVGKRFCVKSVYILGKIWM). Residues 194 to 241 (RRFWKVNNHVVYNHQEAGKYENHTENALLLYMACTHASNPVYATLKIR) carry the Bipartite nuclear localization signal motif.

This sequence belongs to the geminiviridae capsid protein family. In terms of assembly, homomultimer. Binds to single-stranded and double-stranded viral DNA. Interacts (via nuclear localization signals) with host importin alpha-1a.

Its subcellular location is the virion. It localises to the host nucleus. In terms of biological role, encapsidates the viral DNA into characteristic twinned ('geminate') particles. Binds the genomic viral ssDNA and shuttles it into and out of the cell nucleus. The CP of bipartite geminiviruses is not required for cell-to-cell or systemic movement. The polypeptide is Capsid protein (Bean golden yellow mosaic virus (isolate Puerto Rico) (BGYMV)).